A 337-amino-acid chain; its full sequence is Sideroflexin-4 (337 aa).

An N-acetylserine modification is found at S2. The next 3 membrane-spanning stretches (helical) occupy residues 111–131 (AAFL…LKGI), 133–153 (SVIL…SING), and 165–185 (SLLM…PQFV). An N6-acetyllysine modification is found at K197. Transmembrane regions (helical) follow at residues 251-271 (ASRI…TYFF) and 293-313 (VLAM…IGQI).

This sequence belongs to the sideroflexin family.

The protein resides in the mitochondrion inner membrane. In terms of biological role, mitochondrial amino-acid transporter. Does not act as a serine transporter: not able to mediate transport of serine into mitochondria. This is Sideroflexin-4 from Homo sapiens (Human).